We begin with the raw amino-acid sequence, 379 residues long: 1-deoxy-D-xylulose 5-phosphate reductoisomerase (379 aa).

NADPH contacts are provided by Thr-10, Gly-11, Ser-12, Val-13, and Asn-121. Lys-122 contacts 1-deoxy-D-xylulose 5-phosphate. NADPH is bound at residue Glu-123. Asp-147 is a binding site for Mn(2+). 1-deoxy-D-xylulose 5-phosphate-binding residues include Ser-148, Glu-149, Ser-173, and His-196. Glu-149 is a binding site for Mn(2+). Gly-202 is a binding site for NADPH. 4 residues coordinate 1-deoxy-D-xylulose 5-phosphate: Ser-209, Asn-214, Lys-215, and Glu-218. Position 218 (Glu-218) interacts with Mn(2+).

It belongs to the DXR family. Requires Mg(2+) as cofactor. The cofactor is Mn(2+).

It catalyses the reaction 2-C-methyl-D-erythritol 4-phosphate + NADP(+) = 1-deoxy-D-xylulose 5-phosphate + NADPH + H(+). Its pathway is isoprenoid biosynthesis; isopentenyl diphosphate biosynthesis via DXP pathway; isopentenyl diphosphate from 1-deoxy-D-xylulose 5-phosphate: step 1/6. Catalyzes the NADPH-dependent rearrangement and reduction of 1-deoxy-D-xylulose-5-phosphate (DXP) to 2-C-methyl-D-erythritol 4-phosphate (MEP). The protein is 1-deoxy-D-xylulose 5-phosphate reductoisomerase of Chlamydia abortus (strain DSM 27085 / S26/3) (Chlamydophila abortus).